Consider the following 233-residue polypeptide: Octanoyltransferase (233 aa).

The BPL/LPL catalytic domain occupies 36–211; it reads DTTPDEIWLV…EFTRQLGYPT (176 aa). Substrate is bound by residues 75–82, 142–144, and 155–157; these read RGGQVTYH, SLG, and GLA. The active-site Acyl-thioester intermediate is Cys-173.

The protein belongs to the LipB family.

The protein localises to the cytoplasm. The enzyme catalyses octanoyl-[ACP] + L-lysyl-[protein] = N(6)-octanoyl-L-lysyl-[protein] + holo-[ACP] + H(+). The protein operates within protein modification; protein lipoylation via endogenous pathway; protein N(6)-(lipoyl)lysine from octanoyl-[acyl-carrier-protein]: step 1/2. Its function is as follows. Catalyzes the transfer of endogenously produced octanoic acid from octanoyl-acyl-carrier-protein onto the lipoyl domains of lipoate-dependent enzymes. Lipoyl-ACP can also act as a substrate although octanoyl-ACP is likely to be the physiological substrate. In Yersinia pseudotuberculosis serotype O:3 (strain YPIII), this protein is Octanoyltransferase.